A 637-amino-acid chain; its full sequence is MNPSPLLHLIDSPQDLRRLDKKQLPRLAGELRAFLLESVGQTGGHFASNLGAVELTIALHYVYDTPEDKLVWDVGHQSYPHKILTGRKNQMHTMRQYGGLAGFPKRCESEYDAFGVGHSSTSIGAALGMAAADKLLGGDRRSVAIIGDGAMTAGQAFEALNCAGDMDVDLLVVLNDNEMSISPNVGALPKYLASNVVRDMHGLLSTVKAQTGKVLDKIPGAMEFAQKVEHKIKTLAEEAEHAKQSLSLFENFGFRYTGPVDGHNVENLVDVLKDLRSRKGPQLLHVITKKGNGYKLAENDPVKYHAVANLPKEGGAQMPSEKEPKPAAKPTYTQVFGKWLCDRAAADSRLVAITPAMREGSGLVEFEQRFPDRYFDVGIAEQHAVTFAGGLACEGMKPVVAIYSTFLQRAYDQLVHDIALQNLPVLFAVDRAGIVGADGPTHAGLYDLSFLRCVPNMIVAAPSDENECRLLLSTCYQADAPAAVRYPRGTGTGAPVSDGMETVEIGKGIIRREGEKTAFIAFGSMVATALAVAEKLNATVADMRFVKPIDEELIVRLARSHDRIVTLEENAEQGGAGGAVLEVLAKHGICKPVLLLGVADTVTEHGDPKKLLDDLGLSAEAVERRVREWLPDRDAAN.

Thiamine diphosphate-binding positions include histidine 76 and 117-119 (GHS). Aspartate 148 contacts Mg(2+). Thiamine diphosphate-binding positions include 149–150 (GA), asparagine 177, tyrosine 294, and glutamate 381. Asparagine 177 is a binding site for Mg(2+).

The protein belongs to the transketolase family. DXPS subfamily. In terms of assembly, homodimer. Mg(2+) is required as a cofactor. Requires thiamine diphosphate as cofactor.

The enzyme catalyses D-glyceraldehyde 3-phosphate + pyruvate + H(+) = 1-deoxy-D-xylulose 5-phosphate + CO2. Its pathway is metabolic intermediate biosynthesis; 1-deoxy-D-xylulose 5-phosphate biosynthesis; 1-deoxy-D-xylulose 5-phosphate from D-glyceraldehyde 3-phosphate and pyruvate: step 1/1. Catalyzes the acyloin condensation reaction between C atoms 2 and 3 of pyruvate and glyceraldehyde 3-phosphate to yield 1-deoxy-D-xylulose-5-phosphate (DXP). This chain is 1-deoxy-D-xylulose-5-phosphate synthase, found in Neisseria gonorrhoeae (strain ATCC 700825 / FA 1090).